A 140-amino-acid chain; its full sequence is Nucleoside diphosphate kinase (140 aa).

Lysine 9, phenylalanine 57, arginine 85, threonine 91, arginine 102, and asparagine 112 together coordinate ATP. The active-site Pros-phosphohistidine intermediate is the histidine 115.

The protein belongs to the NDK family. As to quaternary structure, homotetramer. Mg(2+) is required as a cofactor.

Its subcellular location is the cytoplasm. The enzyme catalyses a 2'-deoxyribonucleoside 5'-diphosphate + ATP = a 2'-deoxyribonucleoside 5'-triphosphate + ADP. It catalyses the reaction a ribonucleoside 5'-diphosphate + ATP = a ribonucleoside 5'-triphosphate + ADP. Major role in the synthesis of nucleoside triphosphates other than ATP. The ATP gamma phosphate is transferred to the NDP beta phosphate via a ping-pong mechanism, using a phosphorylated active-site intermediate. The protein is Nucleoside diphosphate kinase of Chlorobaculum parvum (strain DSM 263 / NCIMB 8327) (Chlorobium vibrioforme subsp. thiosulfatophilum).